The sequence spans 72 residues: DNA-directed RNA polymerase subunit Rpo10 (72 aa).

Residues Cys-7, Cys-10, Cys-45, and Cys-46 each coordinate Zn(2+).

Belongs to the archaeal Rpo10/eukaryotic RPB10 RNA polymerase subunit family. In terms of assembly, part of the RNA polymerase complex. The cofactor is Zn(2+).

The protein resides in the cytoplasm. It catalyses the reaction RNA(n) + a ribonucleoside 5'-triphosphate = RNA(n+1) + diphosphate. Functionally, DNA-dependent RNA polymerase (RNAP) catalyzes the transcription of DNA into RNA using the four ribonucleoside triphosphates as substrates. This is DNA-directed RNA polymerase subunit Rpo10 from Methanopyrus kandleri (strain AV19 / DSM 6324 / JCM 9639 / NBRC 100938).